The primary structure comprises 337 residues: Casein kinase I isoform alpha (337 aa).

A2 is subject to N-acetylalanine. A Phosphoserine modification is found at S4. K8 bears the N6-acetyllysine mark. The Protein kinase domain maps to 17–285 (YKLVRKIGSG…YLRQLFRILF (269 aa)). Residues 23–31 (IGSGSFGDI) and K46 contribute to the ATP site. The active-site Proton acceptor is the D136. A compositionally biased stretch (low complexity) spans 309–325 (AASSSGQGQQAQTPTGK). Positions 309–337 (AASSSGQGQQAQTPTGKQTDKTKSNMKGF) are disordered.

The protein belongs to the protein kinase superfamily. CK1 Ser/Thr protein kinase family. Casein kinase I subfamily. Interacts with the Axin complex. Interacts with TUT1, leading to TUT1 phosphorylation. Interacts with FAM83A, FAM83B, FAM83C, FAM83D, FAM83E, FAM83F, FAM83G and FAM83H (via DUF1669). Interaction with FAM83H recruits CSNK1A1 to keratin filaments. Post-translationally, phosphorylated by MTOR in response to mitogenic stimulation, leading to its activation.

The protein localises to the cytoplasm. It is found in the cytoskeleton. Its subcellular location is the microtubule organizing center. The protein resides in the centrosome. It localises to the chromosome. The protein localises to the centromere. It is found in the kinetochore. Its subcellular location is the nucleus speckle. The protein resides in the cilium basal body. It localises to the spindle. The enzyme catalyses L-seryl-[protein] + ATP = O-phospho-L-seryl-[protein] + ADP + H(+). It carries out the reaction L-threonyl-[protein] + ATP = O-phospho-L-threonyl-[protein] + ADP + H(+). Casein kinases are operationally defined by their preferential utilization of acidic proteins such as caseins as substrates. Can phosphorylate a large number of proteins. Participates in Wnt signaling. Phosphorylates CTNNB1 at 'Ser-45'. May phosphorylate PER1 and PER2. May play a role in segregating chromosomes during mitosis. May play a role in keratin cytoskeleton disassembly and thereby, it may regulate epithelial cell migration. Acts as a positive regulator of mTORC1 and mTORC2 signaling in response to nutrients by mediating phosphorylation of DEPTOR inhibitor. Acts as an inhibitor of NLRP3 inflammasome assembly by mediating phosphorylation of NLRP3. The sequence is that of Casein kinase I isoform alpha (Csnk1a1) from Mus musculus (Mouse).